We begin with the raw amino-acid sequence, 730 residues long: Propionyl-CoA carboxylase alpha chain, mitochondrial (730 aa).

The transit peptide at M1–C52 directs the protein to the mitochondrion. Positions T62–P509 constitute a Biotin carboxylation domain. Position 65 is an N6-acetyllysine; alternate (K65). N6-succinyllysine; alternate is present on K65. An N6-succinyllysine modification is found at K119. K150 carries the N6-acetyllysine; alternate modification. K150 is modified (N6-succinyllysine; alternate). An N6-acetyllysine modification is found at K154. ATP is bound at residue K177. Residues K181–K378 enclose the ATP-grasp domain. The residue at position 188 (K188) is an N6-succinyllysine. Residue K200 is modified to N6-acetyllysine; alternate. N6-succinyllysine; alternate is present on K200. ATP-binding positions include A209–I270, E261, and N296. Residue S252 is modified to Phosphoserine. An N6-succinyllysine modification is found at K262. Mg(2+) contacts are provided by E336, E349, and N351. 3 residues coordinate Mn(2+): E336, E349, and N351. Residue E349 is part of the active site. Residue K407 is modified to N6-succinyllysine. F409 is a binding site for biotin. 3 positions are modified to N6-succinyllysine: K502, K513, and K650. One can recognise a Biotinyl-binding domain in the interval K655–E730. K696 bears the N6-biotinyllysine mark.

In terms of assembly, the holoenzyme is a dodecamer composed of 6 PCCA/alpha subunits and 6 PCCB/beta subunits. Interacts (via the biotin carboxylation domain) with SIRT4. Interacts with SIRT3 and SIRT5. It depends on Mg(2+) as a cofactor. Mn(2+) is required as a cofactor. Biotin serves as cofactor. Post-translationally, acetylated. The biotin cofactor is covalently attached to the C-terminal biotinyl-binding domain and is required for the catalytic activity. Biotinylation is catalyzed by HLCS.

Its subcellular location is the mitochondrion matrix. The catalysed reaction is propanoyl-CoA + hydrogencarbonate + ATP = (S)-methylmalonyl-CoA + ADP + phosphate + H(+). It catalyses the reaction butanoyl-CoA + hydrogencarbonate + ATP = (2S)-ethylmalonyl-CoA + ADP + phosphate + H(+). Its pathway is metabolic intermediate metabolism; propanoyl-CoA degradation; succinyl-CoA from propanoyl-CoA: step 1/3. This is one of the 2 subunits of the biotin-dependent propionyl-CoA carboxylase (PCC), a mitochondrial enzyme involved in the catabolism of odd chain fatty acids, branched-chain amino acids isoleucine, threonine, methionine, and valine and other metabolites. Propionyl-CoA carboxylase catalyzes the carboxylation of propionyl-CoA/propanoyl-CoA to D-methylmalonyl-CoA/(S)-methylmalonyl-CoA. Within the holoenzyme, the alpha subunit catalyzes the ATP-dependent carboxylation of the biotin carried by the biotin carboxyl carrier (BCC) domain, while the beta subunit then tranfers the carboxyl group from carboxylated biotin to propionyl-CoA. Propionyl-CoA carboxylase also significantly acts on butyryl-CoA/butanoyl-CoA, which is converted to ethylmalonyl-CoA/(2S)-ethylmalonyl-CoA at a much lower rate. Other alternative minor substrates include (2E)-butenoyl-CoA/crotonoyl-CoA. This is Propionyl-CoA carboxylase alpha chain, mitochondrial from Sus scrofa (Pig).